The chain runs to 269 residues: Major capsid protein P2 (269 aa).

Homotrimer.

Its subcellular location is the virion. Functionally, major capsid protein. The sequence is that of Major capsid protein P2 (II) from Pseudoalteromonas phage PM2 (Bacteriophage PM2).